A 142-amino-acid polypeptide reads, in one-letter code: Hemoglobin subunit alpha-4 (142 aa).

The 141-residue stretch at 2 to 142 (TLTDSDKAAI…VATVLTSKYR (141 aa)) folds into the Globin domain. Histidine 59 is an O2 binding site. Histidine 88 lines the heme b pocket.

This sequence belongs to the globin family. Heterotetramer of two alpha chains and two beta chains. In terms of tissue distribution, red blood cells.

Functionally, this is a larval (tadpole) alpha-globin. The chain is Hemoglobin subunit alpha-4 (hba4) from Xenopus laevis (African clawed frog).